We begin with the raw amino-acid sequence, 318 residues long: L-lactate dehydrogenase (318 aa).

Residues V18, D39, K44, Y69, and 83-84 each bind NAD(+); that span reads GA. Substrate is bound by residues Q86 and R92. NAD(+)-binding positions include S105, 122-124, and S147; that span reads VSN. Position 124–127 (124–127) interacts with substrate; the sequence is NPVD. 152 to 155 is a binding site for substrate; that stretch reads DTSR. H179 functions as the Proton acceptor in the catalytic mechanism. Phosphotyrosine is present on Y225. A substrate-binding site is contributed by T234.

This sequence belongs to the LDH/MDH superfamily. LDH family. Homotetramer.

It localises to the cytoplasm. The enzyme catalyses (S)-lactate + NAD(+) = pyruvate + NADH + H(+). Its pathway is fermentation; pyruvate fermentation to lactate; (S)-lactate from pyruvate: step 1/1. Functionally, catalyzes the conversion of lactate to pyruvate. This Clostridium botulinum (strain ATCC 19397 / Type A) protein is L-lactate dehydrogenase.